A 129-amino-acid polypeptide reads, in one-letter code: ATP synthase epsilon chain (129 aa).

This sequence belongs to the ATPase epsilon chain family. In terms of assembly, F-type ATPases have 2 components, CF(1) - the catalytic core - and CF(0) - the membrane proton channel. CF(1) has five subunits: alpha(3), beta(3), gamma(1), delta(1), epsilon(1). CF(0) has three main subunits: a, b and c.

It localises to the cell inner membrane. Produces ATP from ADP in the presence of a proton gradient across the membrane. The polypeptide is ATP synthase epsilon chain (Campylobacter fetus subsp. fetus (strain 82-40)).